A 776-amino-acid polypeptide reads, in one-letter code: Homoaconitase, mitochondrial (776 aa).

Residues 1–38 (MQSRLVSQSGLGRRWAVLRCALSKTYQRRTLTSTRRQF) constitute a mitochondrion transit peptide. Positions 394, 463, and 466 each coordinate [4Fe-4S] cluster.

The protein belongs to the aconitase/IPM isomerase family. Requires [4Fe-4S] cluster as cofactor.

Its subcellular location is the mitochondrion. It carries out the reaction (2R,3S)-homoisocitrate = cis-homoaconitate + H2O. It participates in amino-acid biosynthesis; L-lysine biosynthesis via AAA pathway; L-alpha-aminoadipate from 2-oxoglutarate: step 3/5. Catalyzes the reversible hydration of cis-homoaconitate to (2R,3S)-homoisocitrate, a step in the alpha-aminoadipate pathway for lysine biosynthesis. This Emericella nidulans (strain FGSC A4 / ATCC 38163 / CBS 112.46 / NRRL 194 / M139) (Aspergillus nidulans) protein is Homoaconitase, mitochondrial (lys4).